The chain runs to 207 residues: Large ribosomal subunit protein uL4 (207 aa).

The interval 49–78 is disordered; sequence HAVKNRSAVSGGGRKPWRQKGTGRARQGSI.

Belongs to the universal ribosomal protein uL4 family. As to quaternary structure, part of the 50S ribosomal subunit.

One of the primary rRNA binding proteins, this protein initially binds near the 5'-end of the 23S rRNA. It is important during the early stages of 50S assembly. It makes multiple contacts with different domains of the 23S rRNA in the assembled 50S subunit and ribosome. In terms of biological role, forms part of the polypeptide exit tunnel. The chain is Large ribosomal subunit protein uL4 from Streptococcus equi subsp. zooepidemicus (strain H70).